The sequence spans 82 residues: Exodeoxyribonuclease 7 small subunit (82 aa).

This sequence belongs to the XseB family. As to quaternary structure, heterooligomer composed of large and small subunits.

Its subcellular location is the cytoplasm. It catalyses the reaction Exonucleolytic cleavage in either 5'- to 3'- or 3'- to 5'-direction to yield nucleoside 5'-phosphates.. Its function is as follows. Bidirectionally degrades single-stranded DNA into large acid-insoluble oligonucleotides, which are then degraded further into small acid-soluble oligonucleotides. This Pectobacterium carotovorum subsp. carotovorum (strain PC1) protein is Exodeoxyribonuclease 7 small subunit.